Here is a 149-residue protein sequence, read N- to C-terminus: SsrA-binding protein (149 aa).

The interval K123–E149 is disordered.

This sequence belongs to the SmpB family.

The protein resides in the cytoplasm. In terms of biological role, required for rescue of stalled ribosomes mediated by trans-translation. Binds to transfer-messenger RNA (tmRNA), required for stable association of tmRNA with ribosomes. tmRNA and SmpB together mimic tRNA shape, replacing the anticodon stem-loop with SmpB. tmRNA is encoded by the ssrA gene; the 2 termini fold to resemble tRNA(Ala) and it encodes a 'tag peptide', a short internal open reading frame. During trans-translation Ala-aminoacylated tmRNA acts like a tRNA, entering the A-site of stalled ribosomes, displacing the stalled mRNA. The ribosome then switches to translate the ORF on the tmRNA; the nascent peptide is terminated with the 'tag peptide' encoded by the tmRNA and targeted for degradation. The ribosome is freed to recommence translation, which seems to be the essential function of trans-translation. This is SsrA-binding protein from Cupriavidus taiwanensis (strain DSM 17343 / BCRC 17206 / CCUG 44338 / CIP 107171 / LMG 19424 / R1) (Ralstonia taiwanensis (strain LMG 19424)).